A 98-amino-acid chain; its full sequence is MIPTYMNIMLAFTISLLGMLTYRSHLVASLLCLEGMTMSLFIMTALIASNTHSPLINIMPIILLVFAACEAAVGLALLISISNTYGLDYIHNLNLLQC.

3 helical membrane passes run 1 to 21 (MIPT…GMLT), 27 to 47 (VASL…TALI), and 61 to 81 (IILL…LISI).

The protein belongs to the complex I subunit 4L family. Core subunit of respiratory chain NADH dehydrogenase (Complex I) which is composed of 45 different subunits.

It localises to the mitochondrion inner membrane. The enzyme catalyses a ubiquinone + NADH + 5 H(+)(in) = a ubiquinol + NAD(+) + 4 H(+)(out). In terms of biological role, core subunit of the mitochondrial membrane respiratory chain NADH dehydrogenase (Complex I) which catalyzes electron transfer from NADH through the respiratory chain, using ubiquinone as an electron acceptor. Part of the enzyme membrane arm which is embedded in the lipid bilayer and involved in proton translocation. This is NADH-ubiquinone oxidoreductase chain 4L (MT-ND4L) from Macaca sylvanus (Barbary macaque).